A 1090-amino-acid polypeptide reads, in one-letter code: Exoglucanase B (1090 aa).

The N-terminal stretch at 1–33 (MSSTTRRRSAWVAAATVGVSSFLAVAGITPAIA) is a signal peptide. The propeptide occupies 34 to 53 (AAGAGQPATVTVPAASPVRA). The tract at residues 54 to 699 (AVDGEYAQRF…RLFDDGTTTP (646 aa)) is catalytic. Catalysis depends on D513, which acts as the Nucleophile. 3 consecutive Fibronectin type-III domains span residues 706-791 (VPTG…TKAT), 797-887 (APSV…TKSD), and 897-984 (VPAG…TKTP). The CBM2 domain maps to 983–1090 (TPQTGGSCSV…SFTLNGASCT (108 aa)). C990 and C1089 are oxidised to a cystine. The tract at residues 1069-1090 (NGSHTGQNPNPASFTLNGASCT) is disordered. The segment covering 1070–1090 (GSHTGQNPNPASFTLNGASCT) has biased composition (polar residues).

The protein belongs to the glycosyl hydrolase 48 (cellulase L) family.

It carries out the reaction Hydrolysis of (1-&gt;4)-beta-D-glucosidic linkages in cellulose and cellotetraose, releasing cellobiose from the non-reducing ends of the chains.. Functionally, hydrolyzes cellohexaose to a mixture of cellotetraose, cellotriose and cellobiose, with only a trace of glucose. It hydrolyzed cellopentaose to cellotriose and cellobiose, and cellotetraose to cellobiose, but it did not hydrolyze cellotriose. Also has weak endoglucanase activity. Hydrolyzes glucosidic bonds with inversion of anomeric configuration. In Cellulomonas fimi (strain ATCC 484 / DSM 20113 / JCM 1341 / CCUG 24087 / LMG 16345 / NBRC 15513 / NCIMB 8980 / NCTC 7547 / NRS-133), this protein is Exoglucanase B (cbhB).